Consider the following 58-residue polypeptide: Small ribosomal subunit protein bS21 (58 aa).

The segment at 27-58 is disordered; the sequence is GTLQELRKREHYEKPSVKRKRKSEAARKRKKY. Basic and acidic residues predominate over residues 31 to 42; the sequence is ELRKREHYEKPS. A compositionally biased stretch (basic residues) spans 43-58; the sequence is VKRKRKSEAARKRKKY.

This sequence belongs to the bacterial ribosomal protein bS21 family.

The sequence is that of Small ribosomal subunit protein bS21 (rpsU) from Lactococcus lactis subsp. lactis (strain IL1403) (Streptococcus lactis).